The primary structure comprises 686 residues: U3 small nucleolar RNA-associated protein 4 homolog (686 aa).

WD repeat units follow at residues 7 to 50 (HRVR…ANYF), 51 to 92 (QEKF…QALN), 93 to 135 (IKYA…PDKI), 136 to 181 (QFER…AVHK), 182 to 226 (MIVD…SATG), 227 to 275 (TLVK…SSEK), 276 to 317 (QWVR…LMEK), 318 to 377 (VEVK…PLSK), 378 to 427 (NADH…NISL), 428 to 475 (KRVS…KHLH), 476 to 516 (AFQP…VKQL), 517 to 566 (KLHC…WSRT), 567 to 627 (VQKQ…FPPT), and 628 to 666 (NESD…AVER). Lys-321 is covalently cross-linked (Glycyl lysine isopeptide (Lys-Gly) (interchain with G-Cter in SUMO2)).

As to quaternary structure, interacts with HIVEP1 Interacts with NOL11. Part of the small subunit (SSU) processome, composed of more than 70 proteins and the RNA chaperone small nucleolar RNA (snoRNA) U3. May be a component of the proposed t-UTP subcomplex of the ribosomal small subunit (SSU) processome containing at least UTP4, WDR43, HEATR1, UTP15, WDR75. May be phosphorylated during mitosis; may control the association of this protein with WRD43 and UTP15.

Its subcellular location is the nucleus. It is found in the nucleolus. The protein resides in the chromosome. Ribosome biogenesis factor. Involved in nucleolar processing of pre-18S ribosomal RNA. Part of the small subunit (SSU) processome, first precursor of the small eukaryotic ribosomal subunit. During the assembly of the SSU processome in the nucleolus, many ribosome biogenesis factors, an RNA chaperone and ribosomal proteins associate with the nascent pre-rRNA and work in concert to generate RNA folding, modifications, rearrangements and cleavage as well as targeted d Involved in SSU pre-rRNA processing at sites A', A0, 1 and 2b. Required for optimal pre-ribosomal RNA transcription by RNA polymerase. May be a transcriptional regulator. Its function is as follows. (Microbial infection) Acts as a positive regulator of HIVEP1 which specifically binds to the DNA sequence 5'-GGGACTTTCC-3' found in enhancer elements of numerous viral promoters such as those of HIV-1, SV40, or CMV. In Homo sapiens (Human), this protein is U3 small nucleolar RNA-associated protein 4 homolog.